A 339-amino-acid chain; its full sequence is MSEFTLKTRLLAALEGKPVDKVPVCSVTQTGIVELMDKVGAAWPEAHTNPELMAKLAIANYELSGLEAVRLPYCLTVLGEAMGCEINMGTKNRQPSVTASPYPKNLDGAVVPADLLQRNRIPAVLEAIKIVREKVGPDVPIIGGMEGPVTLASDLISVKSFMKWSIKKTDLFEQALDISAEAAIAYANAMVEAGADVIAIADPVASPDLMSPETFKQFLQSRLQKFSAGVNSVTVLHICGKVNAILSDMADCGFEGLSVEEKIGTAAEGKKIIGDRARLVGNISSPFTLLPGPIDKIKAEAKVALEGGIDVLAPGCGIAPMTPLENVKALVAARDEYYA.

Positions 237, 239, and 316 each coordinate Zn(2+).

This sequence belongs to the uroporphyrinogen decarboxylase family. MtbA/mtaA subfamily. The cofactor is Zn(2+).

It catalyses the reaction methyl-Co(III)-[methanol-specific corrinoid protein] + coenzyme M = Co(I)-[methanol-specific corrinoid protein] + methyl-coenzyme M + H(+). In terms of biological role, methyltransferase involved in methanogenesis in the methanol pathway. Catalyzes the transfer of the methyl group from the methylated corrinoid protein MtaC to coenzyme M, forming the substrate for coenzyme-B sulfoethylthiotransferase. MtaC can be substituted by free cob(I)alamin in vitro. This is Methylcobamide:CoM methyltransferase MtaA (mtaA) from Methanosarcina barkeri (strain Fusaro / DSM 804).